A 322-amino-acid chain; its full sequence is uncharacterized protein (322 aa).

2 stretches are compositionally biased toward basic residues: residues 1-16 (MPGNSRRRGAVRKSGT) and 43-61 (LRPHHPAAKRARAQPRRPV). A disordered region spans residues 1 to 69 (MPGNSRRRGA…PVKRADETET (69 aa)). Gly-261, Ile-281, and Leu-290 together coordinate S-adenosyl-L-methionine.

The protein belongs to the class IV-like SAM-binding methyltransferase superfamily. RNA methyltransferase TrmH family.

This is an uncharacterized protein from Mycobacterium tuberculosis (strain CDC 1551 / Oshkosh).